An 883-amino-acid chain; its full sequence is Lethal(3)malignant brain tumor-like protein 3 (883 aa).

The interaction with RBPJ. Required for transcription repressor activity on Notch target genes stretch occupies residues 1 to 64 (MTESASSTSG…VKKATATTTW (64 aa)). Residues 146–156 (HAKDKDQKDER) show a composition bias toward basic and acidic residues. Positions 146–223 (HAKDKDQKDE…RGDSAVLKQG (78 aa)) are disordered. Composition is skewed to acidic residues over residues 157–166 (DGGEDNDEED) and 185–194 (DDGEERDDEM). MBT repeat units lie at residues 232–332 (WCWA…LRPP), 340–439 (FNWQ…LITP), and 448–543 (FSWD…LQAP). Residues 549 to 593 (LMEPSETGGCPTLGCRGVGHFKKSRYLGTQSGANCPYSEINLSKE) form a CCHHC-type; degenerate zinc finger. A disordered region spans residues 595 to 768 (IFPDRLSGDT…TQQQAQTQQQ (174 aa)). Over residues 616–662 (KRMDTRESSSSPETREKHANNFKEDSEKKKENEVKTSAEAKVVREEP) the composition is skewed to basic and acidic residues. A Glycyl lysine isopeptide (Lys-Gly) (interchain with G-Cter in SUMO2) cross-link involves residue Lys638. Composition is skewed to low complexity over residues 663–742 (TPSV…QQPQ) and 749–768 (QPQQVQQAQPTQQQAQTQQQ). An SAM domain is found at 811-875 (WSTDEVSEFI…FNSILMFKAA (65 aa)).

Interacts with RNF2. Interacts (via SAM domain) with SAMD1 (via SAM domain); the interaction mediates L3MBTL3 binding to chromatin. Interacts with RBPJ; the interaction is required for L3MBTL3 localization to chromatin and is impaired the Notch-derived peptides containing the intracellular domain (NICD). Interacts (via SAM domain) with KDM1A. Interacts with DCAF5. Interacts with DNMT1. Interacts with E2F1. Interacts with SOX2. Interacts with SFMBT1. Detected in hematopoietic progenitor cells in fetal liver. Detected in adult bone marrow, heart, brain, spleen, lung, liver, kidney and testis.

The protein localises to the nucleus. Is a negative regulator of Notch target genes expression, required for RBPJ-mediated transcriptional repression. It recruits KDM1A to Notch-responsive elements and promotes KDM1A-mediated H3K4me demethylation. Involved in the regulation of ubiquitin-dependent degradation of a set of methylated non-histone proteins, including SOX2. It acts as an adapter recruiting the CRL4-DCAF5 E3 ubiquitin ligase complex to methylated target proteins. Also involved in the regulation of ubiquitin-dependent degradation of methylated DNMT1 and E2F1. Required for normal maturation of myeloid progenitor cells. The polypeptide is Lethal(3)malignant brain tumor-like protein 3 (Mus musculus (Mouse)).